The following is a 3051-amino-acid chain: Biorientation of chromosomes in cell division protein 1-like 1 (3051 aa).

Positions 1-33 (MATNPQPQPPPPAPPPPPPQPQPQPPPPPPGPG) are enriched in pro residues. Disordered regions lie at residues 1–47 (MATN…AGAG), 164–197 (HKEE…SANV), 215–288 (ASAA…CPVE), 301–393 (ILLN…KEDF), and 411–469 (VHTS…VRHA). Residues 34 to 47 (AGPGAGGAGGAGAG) are compositionally biased toward gly residues. The segment covering 215 to 227 (ASAARASTETSNA) has biased composition (low complexity). Residues 246–263 (STDKERTSEDMADKEKST) show a composition bias toward basic and acidic residues. Ser266 carries the phosphoserine modification. Residues 312-393 (SEQKNKSTDK…KTVEGTKEDF (82 aa)) show a composition bias toward basic and acidic residues. Over residues 418 to 443 (SFEEDTEEEVVTSDSMEEGEITSDDE) the composition is skewed to acidic residues. Lys473 is subject to N6-acetyllysine. Phosphoserine is present on residues Ser482 and Ser484. Basic and acidic residues-rich tracts occupy residues 497 to 527 (IAKE…EKTK), 549 to 570 (LEPK…EKKV), and 580 to 653 (SRNV…LERE). Residues 497-1203 (IAKEKEERLL…EKHADHRSTL (707 aa)) are disordered. 2 positions are modified to phosphoserine: Ser635 and Ser659. Phosphothreonine occurs at positions 660 and 733. 6 stretches are compositionally biased toward basic and acidic residues: residues 671–772 (TDTR…EENI), 804–852 (KDGK…KIQK), 866–878 (RRSE…KCDM), 940–966 (KPDK…KPFE), 984–1021 (TQKD…DGHK), and 1028–1075 (SSKD…ENRR). Residue Ser1077 is modified to Phosphoserine. Polar residues-rich tracts occupy residues 1092–1103 (NTLSTPSGSSLQ) and 1135–1148 (SKTQ…SQQD). Residues Ser1145 and Ser1318 each carry the phosphoserine modification. Thr1354 carries the phosphothreonine modification. Disordered regions lie at residues 1456-1550 (KLKH…QSEV), 1700-1725 (GSIS…ETEG), and 1760-1890 (VVLG…TGLG). A compositionally biased stretch (basic and acidic residues) spans 1465–1479 (KVKDISIDVERRNEN). Over residues 1482 to 1504 (VDTSAGSGSAPSVLHQRNGQTED) the composition is skewed to polar residues. A phosphoserine mark is found at Ser1531, Ser1701, and Ser1710. Ser2013, Ser2025, Ser2128, and Ser2203 each carry phosphoserine. Disordered stretches follow at residues 2189–2210 (DFEG…STSK), 2258–2285 (TSSV…TPAE), 2403–2447 (STEE…FAGR), 2472–2519 (EDKS…AKDP), 2615–2635 (DQAS…FPEE), and 2717–3051 (VENS…KAKR). Residues 2191-2207 (EGPMPSAPPEAESPLAS) are compositionally biased toward low complexity. Positions 2428–2439 (AEKEEKHGKECP) are enriched in basic and acidic residues. Ser2475 is modified (phosphoserine). A compositionally biased stretch (low complexity) spans 2483-2492 (GSSTASYSAG). 2 positions are modified to phosphoserine: Ser2501 and Ser2618. Basic and acidic residues-rich tracts occupy residues 2621–2633 (KTGD…KSFP), 2724–2746 (TNEE…KDNA), and 2754–2767 (VEAD…EERH). Over residues 2780–2789 (SEDEPDDNPD) the composition is skewed to acidic residues. The segment covering 2791–2822 (LDSRIETAQRQCPETEPHDTKEENSRDLEELP) has biased composition (basic and acidic residues). Residues 2823–2834 (KTSSETNSTTSR) show a composition bias toward polar residues. The segment covering 2848–2864 (TGEKPEQNDDDTIKSQE) has biased composition (basic and acidic residues). Over residues 2871–2880 (IKRKRGRPRK) the composition is skewed to basic residues. The segment at residues 2872 to 2884 (KRKRGRPRKYPVE) is a DNA-binding region (a.T hook). The segment covering 2896 to 2910 (DTGIVTVEQSPSSSK) has biased composition (polar residues). A phosphoserine mark is found at Ser2905 and Ser2907. Over residues 2944–2953 (VRRRGRKPKR) the composition is skewed to basic residues. Ser2954 is subject to Phosphoserine. Residue Thr2956 is modified to Phosphothreonine. Phosphoserine is present on residues Ser2958, Ser2964, and Ser2973. Residues Lys2981 and Lys2982 each participate in a glycyl lysine isopeptide (Lys-Gly) (interchain with G-Cter in ubiquitin) cross-link. Positions 2985–2998 (ESDEEEEEEEEDEP) are enriched in acidic residues. Residues Ser2986 and Ser3019 each carry the phosphoserine modification. Polar residues predominate over residues 3000–3020 (GATTRSTTRSEAQRSKTQLSP). The span at 3039–3051 (QRVEEAPVKKAKR) shows a compositional bias: basic and acidic residues.

It belongs to the BOD1 family. Interacts (via COMPASS-Shg1 domain) with SETD1A at stalled replication forks; this interaction mediates FANCD2-dependent nucleosome remodeling at reversed forks protecting them from nucleolytic degradation.

The protein resides in the chromosome. Its function is as follows. Component of the fork protection machinery required to protect stalled/damaged replication forks from uncontrolled DNA2-dependent resection. Acts by stabilizing RAD51 at stalled replication forks and protecting RAD51 nucleofilaments from the antirecombinogenic activities of FBH1 and BLM. Does not regulate spindle orientation. The chain is Biorientation of chromosomes in cell division protein 1-like 1 from Homo sapiens (Human).